The sequence spans 493 residues: Ribulose bisphosphate carboxylase large chain (493 aa).

Substrate is bound by residues Asn132 and Thr182. Residue Lys184 is the Proton acceptor of the active site. Lys186 is a substrate binding site. Mg(2+) is bound by residues Lys210, Asp212, and Glu213. Position 210 is an N6-carboxylysine (Lys210). Catalysis depends on His302, which acts as the Proton acceptor. Substrate-binding residues include Arg303, His335, and Ser387.

It belongs to the RuBisCO large chain family. Type I subfamily. As to quaternary structure, heterohexadecamer of 8 large chains and 8 small chains. Mg(2+) is required as a cofactor.

The catalysed reaction is 2 (2R)-3-phosphoglycerate + 2 H(+) = D-ribulose 1,5-bisphosphate + CO2 + H2O. It catalyses the reaction D-ribulose 1,5-bisphosphate + O2 = 2-phosphoglycolate + (2R)-3-phosphoglycerate + 2 H(+). In terms of biological role, ruBisCO catalyzes two reactions: the carboxylation of D-ribulose 1,5-bisphosphate, the primary event in carbon dioxide fixation, as well as the oxidative fragmentation of the pentose substrate. Both reactions occur simultaneously and in competition at the same active site. This is Ribulose bisphosphate carboxylase large chain from Acidiphilium cryptum (strain JF-5).